Here is a 156-residue protein sequence, read N- to C-terminus: MAVGILEVSLISGKGLKRSDFLGKIDPYVEIQYKGQTRKSSVAKEDGGRNPTWNDKLKWRAEFPGSGADYKLIVKVMDHDTFSSDDFIGEATVHVKELLEMGVEKGTAELRPTKYNIVDSDLSFVGELLIGVSYSLLQDRGMDGEQFGGWKHSQVD.

The region spanning M1–A108 is the C2 domain. D20, D26, D78, D80, S83, and D86 together coordinate Ca(2+).

Ca(2+) is required as a cofactor.

In terms of biological role, binds to both sense and antisense RNA. Can also bind sheared DNA and dodecamer DNA with a low affinity. Interacts with mesophyll plasmodesmata to mediate its own cell-to-cell transport and potentiate RNA trafficking. May play a role in plant defense signaling. The sequence is that of 16 kDa phloem protein 1 from Arabidopsis thaliana (Mouse-ear cress).